The following is a 113-amino-acid chain: uncharacterized protein (113 aa).

Residues 49-91 (FFVVVGKEEYVVEGGFCTCPDFLVNLKGKSPCAHIIAVEVAKI) form an SWIM-type zinc finger.

This is an uncharacterized protein from Archaeoglobus fulgidus (strain ATCC 49558 / DSM 4304 / JCM 9628 / NBRC 100126 / VC-16).